The primary structure comprises 228 residues: uncharacterized protein (228 aa).

A run of 5 helical transmembrane segments spans residues 14 to 34 (HTIS…MLLA), 42 to 62 (VALF…AITL), 130 to 150 (FMFS…LVGS), 156 to 176 (FSFD…VLFM), and 192 to 212 (IAIA…LIAL).

The protein belongs to the AzlC family.

It localises to the cell membrane. This is an uncharacterized protein from Helicobacter pylori (strain J99 / ATCC 700824) (Campylobacter pylori J99).